A 436-amino-acid chain; its full sequence is Adenylyltransferase and sulfurtransferase UBA4 (436 aa).

ATP-binding positions include Gly74, Asp95, 102–106 (SNLHR), Lys119, and 163–164 (DT). Zn(2+) contacts are provided by Cys205 and Cys208. Catalysis depends on Cys222, which acts as the Glycyl thioester intermediate; for adenylyltransferase activity. 2 residues coordinate Zn(2+): Cys283 and Cys286. The 100-residue stretch at 335 to 434 (NEKDHILIDV…YIDEEDHSYP (100 aa)) folds into the Rhodanese domain. The Cysteine persulfide intermediate; for sulfurtransferase activity role is filled by Cys393.

It in the N-terminal section; belongs to the HesA/MoeB/ThiF family. UBA4 subfamily. Requires Zn(2+) as cofactor.

The protein resides in the cytoplasm. It is found in the cytosol. Its pathway is tRNA modification; 5-methoxycarbonylmethyl-2-thiouridine-tRNA biosynthesis. Plays a central role in 2-thiolation of mcm(5)S(2)U at tRNA wobble positions of cytosolic tRNA(Lys), tRNA(Glu) and tRNA(Gln). Acts by mediating the C-terminal thiocarboxylation of sulfur carrier URM1. Its N-terminus first activates URM1 as acyl-adenylate (-COAMP), then the persulfide sulfur on the catalytic cysteine is transferred to URM1 to form thiocarboxylation (-COSH) of its C-terminus. The reaction probably involves hydrogen sulfide that is generated from the persulfide intermediate and that acts as a nucleophile towards URM1. Subsequently, a transient disulfide bond is formed. Does not use thiosulfate as sulfur donor; NFS1 probably acting as a sulfur donor for thiocarboxylation reactions. Prior mcm(5) tRNA modification by the elongator complex is required for 2-thiolation. May also be involved in protein urmylation. This chain is Adenylyltransferase and sulfurtransferase UBA4, found in Vanderwaltozyma polyspora (strain ATCC 22028 / DSM 70294 / BCRC 21397 / CBS 2163 / NBRC 10782 / NRRL Y-8283 / UCD 57-17) (Kluyveromyces polysporus).